Consider the following 524-residue polypeptide: Histidine ammonia-lyase (524 aa).

The 5-imidazolinone (Ala-Gly) cross-link spans 139–141; sequence ASG. 2,3-didehydroalanine (Ser) is present on S140. The segment at 500–524 is disordered; it reads ADTQAPAPAKLPDSGDEDRDTTSRH.

This sequence belongs to the PAL/histidase family. Contains an active site 4-methylidene-imidazol-5-one (MIO), which is formed autocatalytically by cyclization and dehydration of residues Ala-Ser-Gly.

The protein resides in the cytoplasm. It carries out the reaction L-histidine = trans-urocanate + NH4(+). It functions in the pathway amino-acid degradation; L-histidine degradation into L-glutamate; N-formimidoyl-L-glutamate from L-histidine: step 1/3. In Deinococcus radiodurans (strain ATCC 13939 / DSM 20539 / JCM 16871 / CCUG 27074 / LMG 4051 / NBRC 15346 / NCIMB 9279 / VKM B-1422 / R1), this protein is Histidine ammonia-lyase (hutH).